The chain runs to 500 residues: uncharacterized protein (500 aa).

Over residues 1–13 (MEPSQRSGSFSSI) the composition is skewed to low complexity. The tract at residues 1–23 (MEPSQRSGSFSSISRRRSRVDSR) is disordered. At Ser9 the chain carries Phosphoserine. Transmembrane regions (helical) follow at residues 87 to 107 (VSIA…AVAL), 126 to 146 (LVIG…LCFA), 156 to 176 (LYFR…LLYC), 183 to 203 (WIYL…TFLY), 225 to 245 (MNIL…GILA), 261 to 281 (VASW…IFFF), 312 to 332 (FLLF…NGYQ), 351 to 371 (GNFI…SSFL), 380 to 400 (IMLG…VLDA), 408 to 428 (VYFF…APLI), 445 to 465 (IVVQ…GGAI), and 471 to 491 (VGFI…LIFM).

It belongs to the major facilitator superfamily.

It localises to the golgi apparatus. The protein localises to the membrane. This is an uncharacterized protein from Schizosaccharomyces pombe (strain 972 / ATCC 24843) (Fission yeast).